The chain runs to 378 residues: Ribosomal RNA large subunit methyltransferase G (378 aa).

Belongs to the methyltransferase superfamily. RlmG family.

The protein localises to the cytoplasm. It catalyses the reaction guanosine(1835) in 23S rRNA + S-adenosyl-L-methionine = N(2)-methylguanosine(1835) in 23S rRNA + S-adenosyl-L-homocysteine + H(+). Its function is as follows. Specifically methylates the guanine in position 1835 (m2G1835) of 23S rRNA. This chain is Ribosomal RNA large subunit methyltransferase G, found in Shigella dysenteriae serotype 1 (strain Sd197).